We begin with the raw amino-acid sequence, 192 residues long: NF-kappa-B inhibitor-interacting Ras-like protein 1 (192 aa).

Residue 11–18 (GLLSVGKT) participates in GTP binding. Residues 35-43 (DCETMEDVY) carry the Effector region motif. Residues 58 to 93 (HLYDTRGLQEGVELPKHYFSFADGFVLVYSVNNLES) are interactions with NFKBIA and NFKBIB. Residues 61 to 65 (DTRGL) and 120 to 123 (NKID) contribute to the GTP site. Positions 168-192 (LSQPQSKSSFPLPGRKNKGNSSSEN) are disordered.

This sequence belongs to the small GTPase superfamily. Ras family. KappaB-Ras subfamily. Interacts with both NF-kappa-B inhibitor alpha (NFKBIA) and beta (NFKBIB) in vitro. However, it probably only interacts with NFKBIB in vivo. Forms a complex with NFKBIB and NF-kappa-B heterodimer (p50/NFKB1 and p65/RELA). Also interacts with c-Rel (REL).

Its subcellular location is the cytoplasm. Atypical Ras-like protein that acts as a potent regulator of NF-kappa-B activity by preventing the degradation of NF-kappa-B inhibitor beta (NFKBIB) by most signals, explaining why NFKBIB is more resistant to degradation. May act by blocking phosphorylation of NFKBIB and mediating cytoplasmic retention of p65/RELA NF-kappa-B subunit. It is unclear whether it acts as a GTPase. Both GTP- and GDP-bound forms block phosphorylation of NFKBIB. In Macaca fascicularis (Crab-eating macaque), this protein is NF-kappa-B inhibitor-interacting Ras-like protein 1 (NKIRAS1).